The sequence spans 439 residues: Enolase 1 (439 aa).

Substrate is bound by residues His160 and Glu169. Glu212 functions as the Proton donor in the catalytic mechanism. Asp247, Glu296, and Asp323 together coordinate Mg(2+). Positions 296 and 323 each coordinate substrate. Lys348 acts as the Proton acceptor in catalysis. Residues 375 to 378 (SHRS) and Lys399 contribute to the substrate site.

This sequence belongs to the enolase family. In terms of assembly, homodimer. Mg(2+) serves as cofactor.

The protein resides in the cytoplasm. It carries out the reaction (2R)-2-phosphoglycerate = phosphoenolpyruvate + H2O. It functions in the pathway carbohydrate degradation; glycolysis; pyruvate from D-glyceraldehyde 3-phosphate: step 4/5. This chain is Enolase 1 (ENO1), found in Debaryomyces hansenii (strain ATCC 36239 / CBS 767 / BCRC 21394 / JCM 1990 / NBRC 0083 / IGC 2968) (Yeast).